We begin with the raw amino-acid sequence, 762 residues long: Molybdenum cofactor sulfurase 2 (762 aa).

The residue at position 234 (lysine 234) is an N6-(pyridoxal phosphate)lysine. Residue cysteine 400 is part of the active site. The MOSC domain occupies 590–738 (AWISKALRMP…LECGSILEPV (149 aa)).

It belongs to the class-V pyridoxal-phosphate-dependent aminotransferase family. MOCOS subfamily. Pyridoxal 5'-phosphate serves as cofactor.

It catalyses the reaction Mo-molybdopterin + L-cysteine + AH2 = thio-Mo-molybdopterin + L-alanine + A + H2O. In terms of biological role, sulfurates the molybdenum cofactor. Sulfation of molybdenum is essential for xanthine dehydrogenase (XDH) and aldehyde oxidase (ADO) enzymes in which molybdenum cofactor is liganded by 1 oxygen and 1 sulfur atom in active form. This chain is Molybdenum cofactor sulfurase 2, found in Aedes aegypti (Yellowfever mosquito).